The chain runs to 102 residues: Monothiol glutaredoxin-S4 (102 aa).

Residues 1–101 (MDKLQKMISE…PMLKRVGALW (101 aa)) form the Glutaredoxin domain. Residue C21 participates in [2Fe-2S] cluster binding. The Responsive for interaction with TGA factors signature appears at 99 to 102 (ALWL).

The protein belongs to the glutaredoxin family. CC-type subfamily.

It is found in the cytoplasm. The protein resides in the nucleus. Functionally, may only reduce GSH-thiol disulfides, but not protein disulfides. The protein is Monothiol glutaredoxin-S4 (GRXS4) of Arabidopsis thaliana (Mouse-ear cress).